Here is a 267-residue protein sequence, read N- to C-terminus: Undecaprenyl-diphosphatase (267 aa).

Transmembrane regions (helical) follow at residues 1–21 (MSELQIVVLALIQGLTEFLPI), 39–59 (QGLAFDLILNIGTLSAVLIYF), 87–107 (WWILWSTIPAALIGFFGKSLV), 113–133 (SGYVIAVTTTVFGLLLWWADA), 144–164 (TGLKGALFIGFAQVLALIPGT), 189–209 (FLMSIPIIAMASGYDLLKFIL), 219–239 (LFLGAGISFVSAILCIHVFLI), and 244–264 (VGMMPFVIYRLLLGGFLFYIL).

Belongs to the UppP family.

The protein localises to the cell inner membrane. The enzyme catalyses di-trans,octa-cis-undecaprenyl diphosphate + H2O = di-trans,octa-cis-undecaprenyl phosphate + phosphate + H(+). Catalyzes the dephosphorylation of undecaprenyl diphosphate (UPP). Confers resistance to bacitracin. This is Undecaprenyl-diphosphatase from Psychromonas ingrahamii (strain DSM 17664 / CCUG 51855 / 37).